Consider the following 430-residue polypeptide: UDP-N-acetylglucosamine 1-carboxyvinyltransferase (430 aa).

Position 22–23 (22–23 (KN)) interacts with phosphoenolpyruvate. R102 contributes to the UDP-N-acetyl-alpha-D-glucosamine binding site. The active-site Proton donor is C126. C126 carries the 2-(S-cysteinyl)pyruvic acid O-phosphothioketal modification. Residues 131–135 (RPVDL), 172–175 (KVSV), D317, and I339 contribute to the UDP-N-acetyl-alpha-D-glucosamine site.

The protein belongs to the EPSP synthase family. MurA subfamily.

It is found in the cytoplasm. The catalysed reaction is phosphoenolpyruvate + UDP-N-acetyl-alpha-D-glucosamine = UDP-N-acetyl-3-O-(1-carboxyvinyl)-alpha-D-glucosamine + phosphate. The protein operates within cell wall biogenesis; peptidoglycan biosynthesis. In terms of biological role, cell wall formation. Adds enolpyruvyl to UDP-N-acetylglucosamine. The polypeptide is UDP-N-acetylglucosamine 1-carboxyvinyltransferase (Rhizobium leguminosarum bv. trifolii (strain WSM2304)).